Consider the following 131-residue polypeptide: Fumarate reductase subunit C (131 aa).

Transmembrane regions (helical) follow at residues 30 to 50, 61 to 81, and 110 to 130; these read EGTA…LFAL, IGFL…AAAL, and IKGL…VALF.

It belongs to the FrdC family. In terms of assembly, part of an enzyme complex containing four subunits: a flavoprotein (FrdA), an iron-sulfur protein (FrdB), and two hydrophobic anchor proteins (FrdC and FrdD).

It is found in the cell inner membrane. In terms of biological role, two distinct, membrane-bound, FAD-containing enzymes are responsible for the catalysis of fumarate and succinate interconversion; fumarate reductase is used in anaerobic growth, and succinate dehydrogenase is used in aerobic growth. Anchors the catalytic components of the fumarate reductase complex to the cell inner membrane, binds quinones. The protein is Fumarate reductase subunit C of Klebsiella pneumoniae subsp. pneumoniae (strain ATCC 700721 / MGH 78578).